The sequence spans 688 residues: MEYIKIAKVSNVVLHRRGTATQGTLHLTTHHLIFESPQLSTEFWFPYPLIYGVHKNPGSTLLSKLTSTNQIQLEGTDSQNYKLYQGKDLWSFVNIKVIGKDYAVFSLDFGGDLHLQARKVYDSILNLTVLSNITQLYAFIYISNNLERKLPSPDSWDIYDPIKEFRRQGLDSKDETCPWRLSTVNEHYEFCPTYPSKLFVPRSTSDILLKHASKFRSQKRIPVLTYHHKATDCNILRSSQPLPGLINQRSIQDEKLVWESFNSFCNKDIRRTKHVIVDARPRTNALAQMALGGGTENMDNYNFFLADNNMGVDKSLKLPTVTRLFLGIDNIHIVSNTAAYMTEVICQGGDLNLPLEQNLIRSQKFSNWLKLNTLILKSVDMLLKSIIFNHSNVLVHCSDGWDRTSQVVSLLEICLDPFYRTFEGFMILVEKDWCSFGHRFLERSGHLNSDIRFHDNTMHSNFNDVDTNGDDLDIGVNTQDDYAEDDEGGEDETNLINLSRISKKFNENFKLNKKSLKFVSPVFQQFLDCVYQLLTQNPDLFEFNERFLRRLVYHLYSCQYGTFLSNSEKEKFQQNLPNKTKSVWDYFRSRRKQFINPNFIQRKRSGMNEHDQNLEEEEKVEWISPDLKKVQWWWQLYGRKDSEMNDELRHKRDSVPISVDKKSKEHSNSDGGKGLNLSIFGFDMFNRK.

A Myotubularin phosphatase domain is found at 155 to 637; the sequence is SWDIYDPIKE…KKVQWWWQLY (483 aa). The Phosphocysteine intermediate role is filled by C397. A compositionally biased stretch (basic and acidic residues) spans 647 to 668; it reads ELRHKRDSVPISVDKKSKEHSN. The segment at 647–672 is disordered; that stretch reads ELRHKRDSVPISVDKKSKEHSNSDGG.

It belongs to the protein-tyrosine phosphatase family. Non-receptor class myotubularin subfamily.

The protein localises to the cytoplasm. The catalysed reaction is a 1,2-diacyl-sn-glycero-3-phospho-(1D-myo-inositol-3-phosphate) + H2O = a 1,2-diacyl-sn-glycero-3-phospho-(1D-myo-inositol) + phosphate. Its function is as follows. Lipid phosphatase which dephosphorylates phosphatidylinositol 3-monophosphate (PI3P). Involved in the control of PI3P-dependent signaling and in the maintenance of endosomal system integrity. The polypeptide is Phosphoinositide 3-phosphatase (Saccharomyces cerevisiae (strain ATCC 204508 / S288c) (Baker's yeast)).